The primary structure comprises 205 residues: Octanoyltransferase (205 aa).

In terms of domain architecture, BPL/LPL catalytic spans Asn30–Phe205. Substrate-binding positions include Arg68–His75, Ala140–Gly142, and Gly153–Ala155. The Acyl-thioester intermediate role is filled by Cys171.

Belongs to the LipB family.

It is found in the cytoplasm. It catalyses the reaction octanoyl-[ACP] + L-lysyl-[protein] = N(6)-octanoyl-L-lysyl-[protein] + holo-[ACP] + H(+). Its pathway is protein modification; protein lipoylation via endogenous pathway; protein N(6)-(lipoyl)lysine from octanoyl-[acyl-carrier-protein]: step 1/2. Functionally, catalyzes the transfer of endogenously produced octanoic acid from octanoyl-acyl-carrier-protein onto the lipoyl domains of lipoate-dependent enzymes. Lipoyl-ACP can also act as a substrate although octanoyl-ACP is likely to be the physiological substrate. This Wolbachia sp. subsp. Brugia malayi (strain TRS) protein is Octanoyltransferase.